The primary structure comprises 121 residues: Basic phospholipase A2 3 (121 aa).

Cystine bridges form between Cys26–Cys115, Cys28–Cys44, Cys43–Cys95, Cys49–Cys121, Cys50–Cys88, Cys57–Cys81, and Cys75–Cys86. Residues Tyr27, Gly29, and Gly31 each coordinate Ca(2+). His47 is an active-site residue. Asp48 provides a ligand contact to Ca(2+). Asp89 is a catalytic residue.

The protein belongs to the phospholipase A2 family. Group II subfamily. D49 sub-subfamily. The cofactor is Ca(2+). As to expression, expressed by the venom gland.

The protein localises to the secreted. It catalyses the reaction a 1,2-diacyl-sn-glycero-3-phosphocholine + H2O = a 1-acyl-sn-glycero-3-phosphocholine + a fatty acid + H(+). PLA2 catalyzes the calcium-dependent hydrolysis of the 2-acyl groups in 3-sn-phosphoglycerides. The chain is Basic phospholipase A2 3 from Daboia russelii (Russel's viper).